The primary structure comprises 412 residues: Citrate synthase (412 aa).

Active-site residues include histidine 305 and aspartate 364.

The protein belongs to the citrate synthase family.

It carries out the reaction oxaloacetate + acetyl-CoA + H2O = citrate + CoA + H(+). Its pathway is carbohydrate metabolism; tricarboxylic acid cycle; isocitrate from oxaloacetate: step 1/2. This chain is Citrate synthase (gltA), found in Rickettsia bellii.